The primary structure comprises 332 residues: Long form salivary protein D7L2 (332 aa).

Residues 1–21 form the signal peptide; sequence MFPPRKFLLSSFILAALHVTA. Disulfide bonds link Cys-40–Cys-77 and Cys-73–Cys-133. Leukotriene E4 is bound at residue Trp-61. Leukotriene E4 is bound by residues Gly-157 and Lys-176. Disulfide bonds link Cys-184–Cys-219, Cys-200–Cys-331, and Cys-259–Cys-278. Positions 185, 203, and 216 each coordinate noradrenaline. Positions 294 and 297 each coordinate noradrenaline.

Belongs to the PBP/GOBP family. In terms of assembly, interacts with human CD4. In terms of tissue distribution, saliva (at protein level). Female salivary gland (at protein level). Detected in the head and thorax of the female mosquitoes, where the salivary glands are located.

The protein resides in the secreted. Its function is as follows. Modulates blood feeding of female mosquitoes on vertebrate species by binding and sequestering different mediators involved in the host response, such as biogenic amines and eicosanoids. Binds serotonin, histamine, tryptamine, noradrenaline, leukotriene B4, leukotriene C4, leukotriene D4, leukotriene E4 and U-46619, a stable analog of thromboxane A2. Does not bind adrenaline. Exhibits vasodilating activity. Inhibits agonist-induced platelet aggregation but not blood clotting. (Microbial infection) Probably promotes Plasmodium gallinaceum oocyst development in mosquito midgut. In Aedes aegypti (Yellowfever mosquito), this protein is Long form salivary protein D7L2.